A 275-amino-acid chain; its full sequence is Lectin (275 aa).

The N-terminal stretch at 1-30 is a signal peptide; the sequence is MASLQTQMISFYLIFLSILLTTIFFFKVNS. D-glucose contacts are provided by Asp-111 and Gly-129. Mn(2+) is bound by residues Glu-149 and Asp-151. Residues Asp-151, Phe-153, Asn-155, and Asp-159 each contribute to the Ca(2+) site. Positions 159 and 166 each coordinate Mn(2+). Residues 211–217 constitute a propeptide that is removed on maturation; it reads NSLEEEN. Residues Gly-246 and Ala-247 each coordinate D-glucose. Positions 270–275 are excised as a propeptide; that stretch reads KQAADA.

Belongs to the leguminous lectin family. In terms of assembly, heterotetramer of two alpha and two beta chains. Post-translationally, the mature form consists of two chains, alpha and beta, produced by cleavage of the immature protein. These remain cleaved, yet fold together to form one subunit.

In terms of biological role, D-mannose specific lectin. The polypeptide is Lectin (Lens culinaris (Lentil)).